The sequence spans 945 residues: MSRITCPITDCKCKCNKNNCVYCVMGRQGLPGPKGSSGNSIYVGTGVPSPFLGNNGDLYIDSSTGLLYAKVNGVWVPQGSLKGDPGASGSKGEKGDKGSSGEAGLKGEQGTKGEQGDQGEQGDKGDKGDKGDVGAKGDQGDKGDQGDVGAKGDQGDKGDQGDVGAKGDQGDKGDKGDQGDKGDVGDPGVKGDKGDTGDKGDKGDKGDKGQNGSEILFGLGIPSPDLGEDGDVYIDTLTGNVYQKIGGVWVLETNIKGEKGDQGDKGDTGSKGDQGDKGDQGDKGDQGDKGDVGDKGNKGDTGSKGDVGDKGDVGDKGDKGDTGDKGDKGDTGDKGDKGDVGDKGDKGDVGDKGDVGDKGDVGDKGDKGDTGDKGDKGDIGDKGDKGDIGDKGDKGDIGDKGDKGDVGDKGDKGDKGDIGDKGDKGDIGDKGDKGDKGDKGENGSGILFGLGIPSPDLGEDGDIYIDTLTGNVYQKIGGVWVLETSIKGEKGDKGDTGDKGDTGDKGDTGDKGDTGDKGDTGDKGDVGDKGDVGDKGDVGDKGDVGDKGDKGDIGDKGDKGDLGDKGDKGDVGDKGDVGDKGDKGDIGDKGDKGDLGDKGDKGDVGDKGDKGDVGDKGDKGDIGDKGDKGDVGDKGDKGDIGDKGDKGDKGDVGSKGDKGDKGDVGDKGDKGDVGSKGDKGDKGDKGDVGPVGASILFGAGVPSPTTGENGDSYIDNSTGVFYLKINDVWVPQTNIKGDKGDKGDKGDKGDKGDTGDVGLKGDTGTPGSGPIIPYSSGLTPVALAVVAVAGGGIADTGASYDFGVSSPSVTLVGVNLDFTGPVQGLLPNMAWSAPRDTVITSLATAFQVSVAISAVLEPIFLRTQVYRELAANPGVFEPLAGAIVEFDVASSALISVGTVFRGIVTGLSIPVNAGDRLIVFANTRTTSLISVGTVTGFISSGLALA.

Disordered stretches follow at residues 80–226 (SLKG…SPDL) and 257–441 (GEKG…DKGE). 2 consecutive Collagen-like domains span residues 83-142 (GDPG…QGDK) and 146-205 (GDVG…KGDK). Composition is skewed to basic and acidic residues over residues 109 to 145 (QGTK…KGDQ) and 168 to 208 (DQGD…KGDK). N-linked (GlcNAc...) asparagine; by host glycosylation is present at asparagine 211. Collagen-like domains are found at residues 257–376 (GEKG…KGDK), 383–442 (GDKG…KGEN), 488–547 (GEKG…VGDK), 554–613 (GDKG…KGDV), and 635–694 (GDKG…VGAS). A glycan (N-linked (GlcNAc...) asparagine; by host) is linked at asparagine 442. Over residues 488–687 (GEKGDKGDTG…DKGDKGDKGD (200 aa)) the composition is skewed to basic and acidic residues. The interval 488-712 (GEKGDKGDTG…SPTTGENGDS (225 aa)) is disordered. A compositionally biased stretch (polar residues) spans 703 to 712 (SPTTGENGDS). Residue asparagine 716 is glycosylated (N-linked (GlcNAc...) asparagine; by host). The tract at residues 733-768 (TNIKGDKGDKGDKGDKGDKGDTGDVGLKGDTGTPGS) is disordered. Over residues 736–754 (KGDKGDKGDKGDKGDKGDT) the composition is skewed to basic and acidic residues. The span at 756–765 (DVGLKGDTGT) shows a compositional bias: low complexity.

May be hydroxylated on lysine by the viral-encoded procollagen-lysine,2-oxoglutarate 5-dioxygenase.

The protein localises to the virion. In terms of biological role, may participate in the formation of a layer of cross-linked glycosylated fibrils at the viral surface thus giving it a hairy-like appearance. The protein is Collagen-like protein 1 of Acanthamoeba polyphaga mimivirus (APMV).